We begin with the raw amino-acid sequence, 670 residues long: Acetolactate synthase, chloroplastic (670 aa).

Composition is skewed to low complexity over residues 1–48 and 55–77; these read MAAA…SSSS and KSSSPSSISAVLNTTTNVTTTPS. Residues 1 to 55 constitute a chloroplast transit peptide; sequence MAAATTTTTTSSSISFSTKPSPSSSKSPLPISRFSLPFSLNPNKSSSSSRRRGIK. The interval 1 to 94 is disordered; the sequence is MAAATTTTTT…ETFISRFAPD (94 aa). E144 is a thiamine diphosphate binding site. Residue S186 coordinates FAD. Q207 contributes to the thiamine diphosphate binding site. Residues K220 and R246 each contribute to the (R)-imazaquin site. Residue R246 participates in FAD binding. A chlorimuron-ethyl-binding site is contributed by K256. FAD contacts are provided by residues G308 and 331–332; that span reads TL. C340 is subject to Cysteine sulfinic acid (-SO2H). Residues 349-352 and 371-375 each bind FAD; these read LGMH and GVRFD. 376-377 contacts chlorimuron-ethyl; the sequence is DR. FAD-binding positions include 395–396 and 414–415; these read DI and DV. The stretch at 414–446 forms a coiled coil; sequence DVKLALQGMNKVLENRAEELKLDFGVWRNELNV. Position 487–488 (487–488) interacts with thiamine diphosphate; sequence QH. Residue 508-509 coordinates FAD; sequence GG. Residues 511-513, 538-540, and 565-570 each bind thiamine diphosphate; these read GAM, DGS, and NQHLGM. Mg(2+) contacts are provided by D538, N565, and H567. Positions 574 and 653 each coordinate chlorimuron-ethyl.

The protein belongs to the TPP enzyme family. As to quaternary structure, homodimer or homotetramer. The acetolactate synthase complex contains both large catalytic subunits and small regulatory subunits. Homodimer. The acetolactate synthase complex contains 4 homodimers of the large catalytic subunits, and 1 homotetramer of the small regulatory subunits. Mg(2+) serves as cofactor. It depends on FAD as a cofactor. The cofactor is thiamine diphosphate.

It is found in the plastid. Its subcellular location is the chloroplast. It catalyses the reaction 2 pyruvate + H(+) = (2S)-2-acetolactate + CO2. It functions in the pathway amino-acid biosynthesis; L-isoleucine biosynthesis; L-isoleucine from 2-oxobutanoate: step 1/4. Its pathway is amino-acid biosynthesis; L-valine biosynthesis; L-valine from pyruvate: step 1/4. With respect to regulation, inhibited by asymmetric aryl disulfides, triazolopyrimidine sulfonanilide compounds, isatin derivatives, and sulfonylurea and imidazolinone herbicides. Insensitive to feed-back inhibition by branched-chain amino acids. Catalyzes the formation of acetolactate from pyruvate, the first step in valine and isoleucine biosynthesis. The sequence is that of Acetolactate synthase, chloroplastic (ALS) from Arabidopsis thaliana (Mouse-ear cress).